The chain runs to 267 residues: MEMRQPAVAGQFYPLHCENLEKELTRCFEGLEIREREVFGAVCPHAGYIYSGKVAAHVYATLPEADTYVLFGPNHTGYGSPVSLSRETWKTPLGTIDVDLELADGFLGSIVDTDELGHTYEHSIEVQLPFLQYRFGRDFKILPICMGMQDKDTAVEVGSLVADLVSESGKRAVIIASSDFTHYETAEHARETDSEVIDAILKLDVPGMYDSLYRRNASVCGYGPIAAMLSASQKLGGSRATLLEYANSGDVSGDMSAVVGYAAIIVE.

Belongs to the MEMO1 family.

The sequence is that of MEMO1 family protein MA_0601 from Methanosarcina acetivorans (strain ATCC 35395 / DSM 2834 / JCM 12185 / C2A).